A 440-amino-acid polypeptide reads, in one-letter code: MENIQKLIARYPLVEDLVALKETTWFNPGATSLAQGLPYVGLTEQDVNAAHDRLARFAPYLAKAFPQTAAAGGMIESDVVAIPAMQKRLEKEYGQTINGEMLLKKDSHLAISGSIKARGGIYEVLTHAEKLALEAGLLTTDDDYSVLLSPEFKQFFSQYSIAVGSTGNLGLSIGIMSACIGFKVTVHMSADARAWKKAKLRSHGVTVVEYEDDYGVAVEQGRKAAQSDPNCFFIDDENSRTLFLGYAVAGQRLKAQFAQQGRVVDASHPLFVYLPCGVGGGPGGVAFGLKLAFGDNVHCFFAEPTHSPCMLLGVYTGLHDAISVQDIGIDNLTAADGLAVGRASGFVGRAMERLLDGLYTLDDQTMYDMLGWLAQEEGIRLEPSALAGMAGPQRICAAAAYQQRHGFSQTQLGNATHLVWATGGGMVPEDEMEQYLAKGR.

At Lys-116 the chain carries N6-(pyridoxal phosphate)lysine.

This sequence belongs to the serine/threonine dehydratase family. DsdA subfamily. Monomer. It depends on pyridoxal 5'-phosphate as a cofactor.

It carries out the reaction D-serine = pyruvate + NH4(+). The protein is D-serine dehydratase of Salmonella dublin (strain CT_02021853).